Reading from the N-terminus, the 33-residue chain is Protamine TP16 (33 aa).

The tract at residues 1 to 33 (MPRRRRSSSRPVRRRRRARVSRRRRRRGRRRRR) is disordered.

As to expression, testis.

Its subcellular location is the nucleus. It is found in the chromosome. Its function is as follows. Protamines substitute for histones in the chromatin of sperm during the haploid phase of spermatogenesis. They compact sperm DNA into a highly condensed, stable and inactive complex. The protein is Protamine TP16 of Oncorhynchus mykiss (Rainbow trout).